The chain runs to 66 residues: uncharacterized protein (66 aa).

An N-terminal signal peptide occupies residues 1-19; that stretch reads MRRLYRHLASFFLLPSCPG.

This is an uncharacterized protein from Saccharomyces cerevisiae (strain ATCC 204508 / S288c) (Baker's yeast).